The chain runs to 251 residues: 1-(5-phosphoribosyl)-5-[(5-phosphoribosylamino)methylideneamino] imidazole-4-carboxamide isomerase (251 aa).

The active-site Proton acceptor is the Asp-8. The active-site Proton donor is Asp-131.

The protein belongs to the HisA/HisF family.

The protein resides in the cytoplasm. The catalysed reaction is 1-(5-phospho-beta-D-ribosyl)-5-[(5-phospho-beta-D-ribosylamino)methylideneamino]imidazole-4-carboxamide = 5-[(5-phospho-1-deoxy-D-ribulos-1-ylimino)methylamino]-1-(5-phospho-beta-D-ribosyl)imidazole-4-carboxamide. Its pathway is amino-acid biosynthesis; L-histidine biosynthesis; L-histidine from 5-phospho-alpha-D-ribose 1-diphosphate: step 4/9. The chain is 1-(5-phosphoribosyl)-5-[(5-phosphoribosylamino)methylideneamino] imidazole-4-carboxamide isomerase from Thiobacillus denitrificans (strain ATCC 25259 / T1).